The chain runs to 476 residues: Bifunctional protein HldE (476 aa).

A ribokinase region spans residues 1–319; that stretch reads MKVSLPAFEK…EALALHHGES (319 aa). Residue 195–198 participates in ATP binding; sequence NMSE. Asp-264 is an active-site residue. The segment at 345-476 is cytidylyltransferase; sequence MTNGCFDILH…AIIQNIMAKQ (132 aa).

This sequence in the N-terminal section; belongs to the carbohydrate kinase PfkB family. It in the C-terminal section; belongs to the cytidylyltransferase family. As to quaternary structure, homodimer.

The enzyme catalyses D-glycero-beta-D-manno-heptose 7-phosphate + ATP = D-glycero-beta-D-manno-heptose 1,7-bisphosphate + ADP + H(+). It carries out the reaction D-glycero-beta-D-manno-heptose 1-phosphate + ATP + H(+) = ADP-D-glycero-beta-D-manno-heptose + diphosphate. It participates in nucleotide-sugar biosynthesis; ADP-L-glycero-beta-D-manno-heptose biosynthesis; ADP-L-glycero-beta-D-manno-heptose from D-glycero-beta-D-manno-heptose 7-phosphate: step 1/4. The protein operates within nucleotide-sugar biosynthesis; ADP-L-glycero-beta-D-manno-heptose biosynthesis; ADP-L-glycero-beta-D-manno-heptose from D-glycero-beta-D-manno-heptose 7-phosphate: step 3/4. Functionally, catalyzes the phosphorylation of D-glycero-D-manno-heptose 7-phosphate at the C-1 position to selectively form D-glycero-beta-D-manno-heptose-1,7-bisphosphate. Its function is as follows. Catalyzes the ADP transfer from ATP to D-glycero-beta-D-manno-heptose 1-phosphate, yielding ADP-D-glycero-beta-D-manno-heptose. This Shewanella sp. (strain MR-4) protein is Bifunctional protein HldE.